The following is a 211-amino-acid chain: Ribosomal RNA small subunit methyltransferase G (211 aa).

S-adenosyl-L-methionine-binding positions include glycine 81, leucine 86, valine 132–glutamate 133, and arginine 147.

The protein belongs to the methyltransferase superfamily. RNA methyltransferase RsmG family.

Its subcellular location is the cytoplasm. The enzyme catalyses guanosine(527) in 16S rRNA + S-adenosyl-L-methionine = N(7)-methylguanosine(527) in 16S rRNA + S-adenosyl-L-homocysteine. Specifically methylates the N7 position of guanine in position 527 of 16S rRNA. This Actinobacillus succinogenes (strain ATCC 55618 / DSM 22257 / CCUG 43843 / 130Z) protein is Ribosomal RNA small subunit methyltransferase G.